The sequence spans 774 residues: Polyribonucleotide nucleotidyltransferase (774 aa).

The Mg(2+) site is built by D485 and D491. The KH domain maps to 552-611; it reads PRIETMSVPKDKIRDIIGTGGKIIREIVATTGAKVDIDDDGTVKISSSDTAQIEAARNWI. Positions 621 to 689 constitute an S1 motif domain; sequence GKIYTGKVVN…NRGKVRLSMR (69 aa). Residues 689-774 form a disordered region; it reads RVVDQETGEE…APAFLTRDDD (86 aa). Positions 700-755 are enriched in basic and acidic residues; the sequence is PDTRPPREERPRGDRGDRGDRGPRRDGDRRREGGDRGPRRDRGDRGDRPRRERSEG.

It belongs to the polyribonucleotide nucleotidyltransferase family. The cofactor is Mg(2+).

The protein resides in the cytoplasm. The catalysed reaction is RNA(n+1) + phosphate = RNA(n) + a ribonucleoside 5'-diphosphate. Functionally, involved in mRNA degradation. Catalyzes the phosphorolysis of single-stranded polyribonucleotides processively in the 3'- to 5'-direction. This Rhizorhabdus wittichii (strain DSM 6014 / CCUG 31198 / JCM 15750 / NBRC 105917 / EY 4224 / RW1) (Sphingomonas wittichii) protein is Polyribonucleotide nucleotidyltransferase.